The sequence spans 331 residues: Mucin-15 (331 aa).

The first 22 residues, 1–22 (MLTLAKIALISSLFISLPFARP), serve as a signal peptide directing secretion. Over 23–233 (QKQNPRRNVT…SDTPKENKNT (211 aa)) the chain is Extracellular. N-linked (GlcNAc...) asparagine glycans are attached at residues Asn30, Asn44, Asn54, Asn59, Asn75, Asn84, Asn120, Asn136, Asn145, Asn152, Asn215, and Asn222. Polar residues predominate over residues 124–162 (ADANPLQVSEHSNSTNSPSPENFTWSLDNDTMNSPEDIS). The tract at residues 124–186 (ADANPLQVSE…VTPFTAEPTE (63 aa)) is disordered. Residues 234–254 (GIVFGAILGAILGASLLSLVG) form a helical membrane-spanning segment. Residues 255–331 (YLLCGQRKTD…DAIPPLRPSI (77 aa)) are Cytoplasmic-facing. Positions 302–331 (AVSDSSMPEGGESLQDGIPMDAIPPLRPSI) are disordered.

In terms of processing, highly glycosylated (N- and O-linked carbohydrates).

It localises to the membrane. The protein is Mucin-15 (Muc15) of Mus musculus (Mouse).